The chain runs to 161 residues: Small ribosomal subunit protein uS9 (161 aa).

The protein belongs to the universal ribosomal protein uS9 family.

The chain is Small ribosomal subunit protein uS9 from Rickettsia felis (strain ATCC VR-1525 / URRWXCal2) (Rickettsia azadi).